A 305-amino-acid chain; its full sequence is uncharacterized protein (305 aa).

The region spanning 5–233 (LELKNVTKNI…ENDTYFFQVE (229 aa)) is the ABC transporter domain. An ATP-binding site is contributed by 37–44 (GPNGAGKT).

The protein belongs to the ABC transporter superfamily.

This is an uncharacterized protein from Bacillus subtilis (strain 168).